We begin with the raw amino-acid sequence, 255 residues long: Tablysin 15 (255 aa).

The first 23 residues, 1–23 (MTSIPVSSFLLAALVLQYATSDA), serve as a signal peptide directing secretion. Cystine bridges form between Cys-27–Cys-40, Cys-31–Cys-117, and Cys-49–Cys-110. Positions 32–34 (RGD) match the Cell attachment site motif. The SCP domain occupies 67–211 (LSKINDVRDH…KARALLTCNF (145 aa)). Residues Trp-82, His-153, and Lys-156 each contribute to the leukotriene E4 site. Intrachain disulfides connect Cys-192-Cys-209 and Cys-232-Cys-243.

This sequence belongs to the CRISP family. As to expression, expressed in salivary glands.

Its subcellular location is the secreted. Anti-inflammatory scavenger of eicosanoids and antithrombotic protein that inhibits platelets aggregation induced by collagen, ADP and convulxin (GPVI agonist). Exhibits high affinity binding for glycoprotein IIb-IIIa receptor (ITGA2B/ITGB3) and endothelial cell alphaVbeta3 (ITGAV/ITGB3) integrins, but not for alpha-5/beta-1 or alpha-2/beta-1. Accordingly, it blocks endothelial cell adhesion to vitronectin (IC(50)~1 nM) and marginally to fibronectin (IC(50)~1 uM), but not to collagen. It also inhibits fibroblast growth factor (FGF)-induced endothelial cell proliferation, and attenuates tube formation in vitro. In addition, it dose-dependently attenuates thrombus formation to collagen under flow. Also binds proinflammatory cysteinyl leukotrienes (leukotrienes C4 (LTC4), D4 (LTD4) and E4 (LTE4)) with submicromolar affinities. The protein is Tablysin 15 of Tabanus yao (Horsefly).